The following is a 227-amino-acid chain: Pyridoxine/pyridoxamine 5'-phosphate oxidase (227 aa).

Substrate contacts are provided by residues 23–26 and lysine 81; that span reads RREY. FMN-binding positions include 76-81, 91-92, arginine 97, lysine 98, and glutamine 120; these read RIVLLK and YT. Substrate-binding residues include tyrosine 138, arginine 142, and serine 146. FMN is bound by residues 155-156 and tryptophan 200; that span reads QS. 206–208 is a substrate binding site; that stretch reads RLH. Arginine 210 lines the FMN pocket.

Belongs to the pyridoxamine 5'-phosphate oxidase family. As to quaternary structure, homodimer. Requires FMN as cofactor.

It catalyses the reaction pyridoxamine 5'-phosphate + O2 + H2O = pyridoxal 5'-phosphate + H2O2 + NH4(+). The enzyme catalyses pyridoxine 5'-phosphate + O2 = pyridoxal 5'-phosphate + H2O2. Its pathway is cofactor metabolism; pyridoxal 5'-phosphate salvage; pyridoxal 5'-phosphate from pyridoxamine 5'-phosphate: step 1/1. It functions in the pathway cofactor metabolism; pyridoxal 5'-phosphate salvage; pyridoxal 5'-phosphate from pyridoxine 5'-phosphate: step 1/1. Catalyzes the oxidation of either pyridoxine 5'-phosphate (PNP) or pyridoxamine 5'-phosphate (PMP) into pyridoxal 5'-phosphate (PLP). This Pectobacterium atrosepticum (strain SCRI 1043 / ATCC BAA-672) (Erwinia carotovora subsp. atroseptica) protein is Pyridoxine/pyridoxamine 5'-phosphate oxidase.